A 129-amino-acid polypeptide reads, in one-letter code: Short-chain dehydrogenase/reductase homolog YusR (129 aa).

Belongs to the short-chain dehydrogenases/reductases (SDR) family.

In Bacillus subtilis (strain 168), this protein is Short-chain dehydrogenase/reductase homolog YusR (yusR).